The following is a 556-amino-acid chain: Optineurin (556 aa).

A disordered region spans residues 1 to 33; sequence MSSKPQIRPAENGEHCRSKMENGMDSMAPPTLS. Positions 11 to 22 are enriched in basic and acidic residues; it reads ENGEHCRSKMEN. A coiled-coil region spans residues 38–164; that stretch reads EEMVQQMKEL…SELQVKLNIA (127 aa). The short motif at 168–173 is the LIR element; it reads DSFVEI. A coiled-coil region spans residues 219–487; it reads VSQLLCCLRN…LLKEQQNLED (269 aa). The segment at 245 to 274 is disordered; it reads ERLSKMENETSNCLESGTQTNQEEESSEAI. Residues 253 to 265 show a composition bias toward polar residues; the sequence is ETSNCLESGTQTN. A UBAN motif is present at residues 453-458; sequence DFHAER. Positions 496 to 524 are disordered; that stretch reads MQNRHGARAPDREHSPRLVQRGTGSQEWP. The segment at 526–556 adopts a CCHC NOA-type zinc-finger fold; the sequence is QRNISIYSCPKCEEILPDLDTLQIHVMDCIN. Cysteine 534, cysteine 537, histidine 550, and cysteine 554 together coordinate Zn(2+).

As to quaternary structure, binds to linear ubiquitin chains. Interacts with LC3 family members. In terms of tissue distribution, expressed in erythrocytes, skeletal muscle, heart, spleen and brain. Weakly expressed in lung and liver (at protein level).

Its subcellular location is the cytoplasm. It localises to the perinuclear region. It is found in the golgi apparatus. The protein resides in the trans-Golgi network. The protein localises to the cytoplasmic vesicle. Its subcellular location is the recycling endosome. It localises to the autophagosome. Functionally, probably part of the TNF-alpha signaling pathway that can shift the equilibrium toward induction of cell death. May act by regulating membrane trafficking and cellular morphogenesis. May act as autophagy receptor that interacts directly with both the cargo to become degraded and an autophagy modifier of the MAP1 LC3 family. This chain is Optineurin (OPTN), found in Gallus gallus (Chicken).